The following is a 315-amino-acid chain: Transcription antitermination protein NusB (315 aa).

The segment at 296-315 is disordered; that stretch reads SANFDTKSAELNDADEKSQD. Residues 302-315 are compositionally biased toward basic and acidic residues; that stretch reads KSAELNDADEKSQD.

It belongs to the NusB family.

Involved in transcription antitermination. Required for transcription of ribosomal RNA (rRNA) genes. Binds specifically to the boxA antiterminator sequence of the ribosomal RNA (rrn) operons. The polypeptide is Transcription antitermination protein NusB (Psychrobacter cryohalolentis (strain ATCC BAA-1226 / DSM 17306 / VKM B-2378 / K5)).